The chain runs to 499 residues: MIKRALISVFDKTGILDLAKFLESRDVEIISTGGTYKHLKENGVKVIDIEEVTGFPEMLDGRVKTLNPLIHGGILAIRDNEEHMKVIEEKGINPIDMVVVNLYPFFNKVEENLSFDEKVEFIDIGGPTMIRAAAKNFKDVVVLTDTKDYENVINEIKENNQVNTQTRKKLAGKVFNLMSAYDAAISNFLLEEEYPEYLTLSYKKNMDLRYGENPHQTAAYYTSTVGKYPMKNFEKLNGKELSYNNIKDMDIAWKTVCEFEEVACCALKHNTPCGVAIGDTVQEAYTKAYECDPISIFGGIVAFNRKVDKETAENLAKIFLEIVVAPDFDEDALEVLKNKKNLRVIKCEEKSTEGKDMAKVDGGILVQKSDNKLLENTKVVTEKSPTEQEMKDLIFGMKVVKYVKSNAIVVVKDGMAKGIGGGQVNRIWAAKEALDRAGDGVVLASDAFFPFGDVAEEAAKWGIKAIIQPGGSIRDEESIKVCNEKGISMVFTGIRHFKH.

Positions M1–T144 constitute an MGS-like domain.

It belongs to the PurH family.

It carries out the reaction (6R)-10-formyltetrahydrofolate + 5-amino-1-(5-phospho-beta-D-ribosyl)imidazole-4-carboxamide = 5-formamido-1-(5-phospho-D-ribosyl)imidazole-4-carboxamide + (6S)-5,6,7,8-tetrahydrofolate. The enzyme catalyses IMP + H2O = 5-formamido-1-(5-phospho-D-ribosyl)imidazole-4-carboxamide. It functions in the pathway purine metabolism; IMP biosynthesis via de novo pathway; 5-formamido-1-(5-phospho-D-ribosyl)imidazole-4-carboxamide from 5-amino-1-(5-phospho-D-ribosyl)imidazole-4-carboxamide (10-formyl THF route): step 1/1. The protein operates within purine metabolism; IMP biosynthesis via de novo pathway; IMP from 5-formamido-1-(5-phospho-D-ribosyl)imidazole-4-carboxamide: step 1/1. In Clostridium botulinum (strain Kyoto / Type A2), this protein is Bifunctional purine biosynthesis protein PurH.